A 220-amino-acid chain; its full sequence is Metalloproteinase inhibitor 2 (220 aa).

Positions methionine 1–alanine 26 are cleaved as a signal peptide. Cysteine 27 lines the Zn(2+) pocket. Involved in metalloproteinase-binding regions lie at residues cysteine 27 to serine 30 and serine 95 to alanine 96. 6 cysteine pairs are disulfide-bonded: cysteine 27/cysteine 98, cysteine 29/cysteine 127, cysteine 39/cysteine 152, cysteine 154/cysteine 201, cysteine 159/cysteine 164, and cysteine 172/cysteine 193. Residues cysteine 27–cysteine 152 enclose the NTR domain.

This sequence belongs to the protease inhibitor I35 (TIMP) family. In terms of assembly, interacts (via the C-terminal) with MMP2 (via the C-terminal PEX domain); the interaction inhibits the MMP2 activity. The activity of TIMP2 is dependent on the presence of disulfide bonds. Predominantly expressed in the lung in alveolar macrophages and epithelial cells. Also found in brain, kidney, intestine, spleen and heart.

The protein localises to the secreted. Its function is as follows. Complexes with metalloproteinases (such as collagenases) and irreversibly inactivates them by binding to their catalytic zinc cofactor. The sequence is that of Metalloproteinase inhibitor 2 (TIMP2) from Cavia porcellus (Guinea pig).